Here is a 160-residue protein sequence, read N- to C-terminus: Cytochrome b6-f complex subunit 4 (160 aa).

The next 3 helical transmembrane spans lie at 36–56, 95–115, and 131–151; these read LLYI…GLAV, LLGV…PFLE, and TVFL…TLPI.

This sequence belongs to the cytochrome b family. PetD subfamily. The 4 large subunits of the cytochrome b6-f complex are cytochrome b6, subunit IV (17 kDa polypeptide, petD), cytochrome f and the Rieske protein, while the 4 small subunits are petG, petL, petM and petN. The complex functions as a dimer.

The protein resides in the plastid. It localises to the chloroplast thylakoid membrane. Its function is as follows. Component of the cytochrome b6-f complex, which mediates electron transfer between photosystem II (PSII) and photosystem I (PSI), cyclic electron flow around PSI, and state transitions. This is Cytochrome b6-f complex subunit 4 from Amborella trichopoda.